The following is a 426-amino-acid chain: MDKGRCTILNSEELWAQARQLFAGGVNSPVRAAVKPFPFYVERGKGAYIYTVEGNKFIDYVLGYGPLILGHSPESVKRKIIEQLEKGWLFGTPSKLEIELAKKISSHIPSAQKIRFVNSGTEATMAAIRLARGYSKRSKILKFSGNYHGAHDYTLVEAGSAATEYNVTTSDGIPMEIMKTVEICEFNDLDCVDKKLRNEDIAAALLEPIMGNAGVILPEKGFLSGLRELTKSYNSLLIFDEVITGFRIDIGGAQSYYQIYPDITTLGKIIGGGFPIGAVAGKAEIIDNFTPAGRVFNAGTFNANPISMIAGIATIEELEKEYPYNIANKASKTLVEELERLLKIKHTINHIGSMFQVFFGIDKVRNYSDAKRANKEYYIKFHERLLKERVFIPPSQYETIFTSAAHEDDVVNDTIDKLAKVIGELS.

Lysine 268 is modified (N6-(pyridoxal phosphate)lysine).

This sequence belongs to the class-III pyridoxal-phosphate-dependent aminotransferase family. HemL subfamily. The cofactor is pyridoxal 5'-phosphate.

The protein resides in the cytoplasm. It catalyses the reaction (S)-4-amino-5-oxopentanoate = 5-aminolevulinate. It functions in the pathway porphyrin-containing compound metabolism; protoporphyrin-IX biosynthesis; 5-aminolevulinate from L-glutamyl-tRNA(Glu): step 2/2. The sequence is that of Glutamate-1-semialdehyde 2,1-aminomutase from Saccharolobus islandicus (strain Y.N.15.51 / Yellowstone #2) (Sulfolobus islandicus).